We begin with the raw amino-acid sequence, 459 residues long: ATP synthase subunit beta (459 aa).

An ATP-binding site is contributed by 148–155; sequence GGAGVGKT.

Belongs to the ATPase alpha/beta chains family. As to quaternary structure, F-type ATPases have 2 components, CF(1) - the catalytic core - and CF(0) - the membrane proton channel. CF(1) has five subunits: alpha(3), beta(3), gamma(1), delta(1), epsilon(1). CF(0) has three main subunits: a(1), b(2) and c(9-12). The alpha and beta chains form an alternating ring which encloses part of the gamma chain. CF(1) is attached to CF(0) by a central stalk formed by the gamma and epsilon chains, while a peripheral stalk is formed by the delta and b chains.

Its subcellular location is the cell inner membrane. It catalyses the reaction ATP + H2O + 4 H(+)(in) = ADP + phosphate + 5 H(+)(out). Produces ATP from ADP in the presence of a proton gradient across the membrane. The catalytic sites are hosted primarily by the beta subunits. In Cellvibrio japonicus (strain Ueda107) (Pseudomonas fluorescens subsp. cellulosa), this protein is ATP synthase subunit beta.